The following is an 862-amino-acid chain: DNA mismatch repair protein MutS (862 aa).

608–615 contributes to the ATP binding site; it reads GPNMAGKS.

This sequence belongs to the DNA mismatch repair MutS family.

In terms of biological role, this protein is involved in the repair of mismatches in DNA. It is possible that it carries out the mismatch recognition step. This protein has a weak ATPase activity. The sequence is that of DNA mismatch repair protein MutS from Bacteroides thetaiotaomicron (strain ATCC 29148 / DSM 2079 / JCM 5827 / CCUG 10774 / NCTC 10582 / VPI-5482 / E50).